The primary structure comprises 272 residues: 3-methyl-2-oxobutanoate hydroxymethyltransferase (272 aa).

Positions 51 and 90 each coordinate Mg(2+). 3-methyl-2-oxobutanoate contacts are provided by residues 51-52, aspartate 90, and lysine 118; that span reads DS. A Mg(2+)-binding site is contributed by glutamate 120. Catalysis depends on glutamate 187, which acts as the Proton acceptor.

Belongs to the PanB family. As to quaternary structure, homodecamer; pentamer of dimers. Mg(2+) serves as cofactor.

Its subcellular location is the cytoplasm. The catalysed reaction is 3-methyl-2-oxobutanoate + (6R)-5,10-methylene-5,6,7,8-tetrahydrofolate + H2O = 2-dehydropantoate + (6S)-5,6,7,8-tetrahydrofolate. The protein operates within cofactor biosynthesis; (R)-pantothenate biosynthesis; (R)-pantoate from 3-methyl-2-oxobutanoate: step 1/2. Functionally, catalyzes the reversible reaction in which hydroxymethyl group from 5,10-methylenetetrahydrofolate is transferred onto alpha-ketoisovalerate to form ketopantoate. This is 3-methyl-2-oxobutanoate hydroxymethyltransferase from Xylella fastidiosa (strain M23).